Here is a 289-residue protein sequence, read N- to C-terminus: Ketose 3-epimerase (289 aa).

Glu-146 serves as the catalytic Proton donor/acceptor. Residue Glu-146 participates in Mn(2+) binding. Substrate contacts are provided by residues Glu-152 and 179–182 (DTYH). The Mn(2+) site is built by Asp-179 and His-205. Arg-211 contributes to the substrate binding site. Residue Glu-240 is the Proton donor/acceptor of the active site. Mn(2+) is bound at residue Glu-240.

Belongs to the hyi family. Homotetramer. The cofactor is Mg(2+). It depends on Mn(2+) as a cofactor. Requires Co(2+) as cofactor.

The enzyme catalyses L-ribulose = L-xylulose. The catalysed reaction is D-allulose = keto-D-fructose. It carries out the reaction keto-L-tagatose = keto-L-sorbose. It catalyses the reaction D-ribulose = D-xylulose. The enzyme catalyses L-allulose = keto-L-fructose. The catalysed reaction is keto-D-tagatose = keto-D-sorbose. In terms of biological role, catalyzes the reversible C-3 epimerization of several ketoses. Shows the highest enzymatic activity for the epimerization of L-ribulose to L-xylulose. Is also able to convert D-allulose (also known as D-psicose) to D-fructose and, to a lesser extent, L-tagatose to L-sorbose, D-ribulose to D-xylulose, L-allulose to L-fructose and D-tagatose to D-sorbose. In Arthrobacter globiformis, this protein is Ketose 3-epimerase.